A 935-amino-acid chain; its full sequence is 2-oxoglutarate dehydrogenase E1 component (935 aa).

It belongs to the alpha-ketoglutarate dehydrogenase family. In terms of assembly, homodimer. Part of the 2-oxoglutarate dehydrogenase (OGDH) complex composed of E1 (2-oxoglutarate dehydrogenase), E2 (dihydrolipoamide succinyltransferase) and E3 (dihydrolipoamide dehydrogenase); the complex contains multiple copies of the three enzymatic components (E1, E2 and E3). Requires thiamine diphosphate as cofactor.

The catalysed reaction is N(6)-[(R)-lipoyl]-L-lysyl-[protein] + 2-oxoglutarate + H(+) = N(6)-[(R)-S(8)-succinyldihydrolipoyl]-L-lysyl-[protein] + CO2. In terms of biological role, E1 component of the 2-oxoglutarate dehydrogenase (OGDH) complex which catalyzes the decarboxylation of 2-oxoglutarate, the first step in the conversion of 2-oxoglutarate to succinyl-CoA and CO(2). In Haemophilus influenzae (strain ATCC 51907 / DSM 11121 / KW20 / Rd), this protein is 2-oxoglutarate dehydrogenase E1 component (sucA).